A 453-amino-acid chain; its full sequence is Ankyrin repeat and SOCS box protein 16 (453 aa).

ANK repeat units lie at residues 56 to 85, 110 to 139, 142 to 171, 175 to 204, 209 to 238, 242 to 279, and 283 to 312; these read CRDPAVHQALFSGNLQQVQALFQDEEAANM, KQTAPLAIATARGYTDCARHLIRQGAELDA, GGRAALHEACARAQFDCVRLLLTFGAKANV, EGTTPLHLCTIPESLQCAKLLLEAGATVNL, SQETPLHVAAARGLEQHVALYLEHGADVGL, QGETALNTACAGAEGPGSCRRHQAAARRLLEAGADARA, and KRHTPLHNACANGCGGLAELLLRYGARAEV. The SOCS box domain maps to 398 to 450; it reads YSSALCMVNQPRQLQHLARLAVRARLGSRCRQGATRLPLPPLLRDYLLLRVEG.

The protein belongs to the ankyrin SOCS box (ASB) family.

The protein operates within protein modification; protein ubiquitination. Functionally, may be a substrate-recognition component of a SCF-like ECS (Elongin-Cullin-SOCS-box protein) E3 ubiquitin-protein ligase complex which mediates the ubiquitination and subsequent proteasomal degradation of target proteins. The polypeptide is Ankyrin repeat and SOCS box protein 16 (ASB16) (Homo sapiens (Human)).